Here is a 476-residue protein sequence, read N- to C-terminus: 3-isopropylmalate dehydratase large subunit (476 aa).

[4Fe-4S] cluster contacts are provided by Cys353, Cys413, and Cys416.

It belongs to the aconitase/IPM isomerase family. LeuC type 1 subfamily. In terms of assembly, heterodimer of LeuC and LeuD. [4Fe-4S] cluster serves as cofactor.

It carries out the reaction (2R,3S)-3-isopropylmalate = (2S)-2-isopropylmalate. It functions in the pathway amino-acid biosynthesis; L-leucine biosynthesis; L-leucine from 3-methyl-2-oxobutanoate: step 2/4. In terms of biological role, catalyzes the isomerization between 2-isopropylmalate and 3-isopropylmalate, via the formation of 2-isopropylmaleate. This chain is 3-isopropylmalate dehydratase large subunit, found in Photobacterium profundum (strain SS9).